We begin with the raw amino-acid sequence, 101 residues long: Large ribosomal subunit protein uL23 (101 aa).

The protein belongs to the universal ribosomal protein uL23 family. In terms of assembly, part of the 50S ribosomal subunit. Contacts protein L29, and trigger factor when it is bound to the ribosome.

In terms of biological role, one of the early assembly proteins it binds 23S rRNA. One of the proteins that surrounds the polypeptide exit tunnel on the outside of the ribosome. Forms the main docking site for trigger factor binding to the ribosome. The chain is Large ribosomal subunit protein uL23 from Nocardia farcinica (strain IFM 10152).